Consider the following 467-residue polypeptide: Na(+)-translocating NADH-quinone reductase subunit A (467 aa).

This sequence belongs to the NqrA family. In terms of assembly, composed of six subunits; NqrA, NqrB, NqrC, NqrD, NqrE and NqrF.

The enzyme catalyses a ubiquinone + n Na(+)(in) + NADH + H(+) = a ubiquinol + n Na(+)(out) + NAD(+). NQR complex catalyzes the reduction of ubiquinone-1 to ubiquinol by two successive reactions, coupled with the transport of Na(+) ions from the cytoplasm to the periplasm. NqrA to NqrE are probably involved in the second step, the conversion of ubisemiquinone to ubiquinol. In Chlamydia pneumoniae (Chlamydophila pneumoniae), this protein is Na(+)-translocating NADH-quinone reductase subunit A.